The chain runs to 97 residues: Nucleoid-associated protein HP_0035 (97 aa).

Belongs to the YbaB/EbfC family. Homodimer.

The protein resides in the cytoplasm. The protein localises to the nucleoid. Functionally, binds to DNA and alters its conformation. May be involved in regulation of gene expression, nucleoid organization and DNA protection. The protein is Nucleoid-associated protein HP_0035 of Helicobacter pylori (strain ATCC 700392 / 26695) (Campylobacter pylori).